A 219-amino-acid polypeptide reads, in one-letter code: Histone H1.4 (219 aa).

Residues 1-15 show a composition bias toward low complexity; it reads MSETAPAAPAAPAPA. The tract at residues 1 to 41 is disordered; it reads MSETAPAAPAAPAPAEKTPVKKKARKSAGAAKRKASGPPVS. S2 is subject to N-acetylserine. S2 is modified (phosphoserine). N6-acetyllysine is present on K17. T18 carries the phosphothreonine modification. The segment covering 20-35 has biased composition (basic residues); it reads VKKKARKSAGAAKRKA. K26 carries the N6-acetyllysine; alternate modification. At K26 the chain carries N6-methyllysine; alternate. Position 34 is an N6-(beta-hydroxybutyryl)lysine; alternate (K34). K34 carries the N6-succinyllysine; alternate modification. Phosphoserine is present on S36. The 74-residue stretch at 36–109 folds into the H15 domain; that stretch reads SGPPVSELIT…GASGSFKLNK (74 aa). K52 bears the N6-(beta-hydroxybutyryl)lysine mark. At R54 the chain carries Citrulline. N6-(beta-hydroxybutyryl)lysine occurs at positions 64, 85, 90, and 106. Residues 91–219 form a disordered region; sequence GTLVQTKGTG…KPKKAPAKKK (129 aa). Basic residues predominate over residues 119 to 140; sequence KPKKAGAAKPKKPAGAAKKPKK. Position 146 is a phosphothreonine (T146). Composition is skewed to basic residues over residues 149 to 160 and 168 to 185; these read KGAKKTPKKAKK and KKAKSPKKAKAAKPKKAP. A Phosphoserine modification is found at S187. A compositionally biased stretch (basic residues) spans 192–219; it reads KAVKPKAAKPKAAKPKTAKPKKAPAKKK.

This sequence belongs to the histone H1/H5 family. Post-translationally, H1 histones are progressively phosphorylated during the cell cycle, becoming maximally phosphorylated during late G2 phase and M phase, and being dephosphorylated sharply thereafter. Acetylated at Lys-26. Deacetylated at Lys-26 by SIRT1. In terms of processing, citrullination at Arg-54 (H1R54ci) by PADI4 takes place within the DNA-binding site of H1 and results in its displacement from chromatin and global chromatin decondensation, thereby promoting pluripotency and stem cell maintenance.

It localises to the nucleus. It is found in the chromosome. Its function is as follows. Histone H1 protein binds to linker DNA between nucleosomes forming the macromolecular structure known as the chromatin fiber. Histones H1 are necessary for the condensation of nucleosome chains into higher-order structured fibers. Also acts as a regulator of individual gene transcription through chromatin remodeling, nucleosome spacing and DNA methylation. This Oryctolagus cuniculus (Rabbit) protein is Histone H1.4.